A 145-amino-acid polypeptide reads, in one-letter code: D-aminoacyl-tRNA deacylase (145 aa).

A Gly-cisPro motif, important for rejection of L-amino acids motif is present at residues glycine 137 to proline 138.

It belongs to the DTD family. Homodimer.

It localises to the cytoplasm. It catalyses the reaction glycyl-tRNA(Ala) + H2O = tRNA(Ala) + glycine + H(+). The enzyme catalyses a D-aminoacyl-tRNA + H2O = a tRNA + a D-alpha-amino acid + H(+). Its function is as follows. An aminoacyl-tRNA editing enzyme that deacylates mischarged D-aminoacyl-tRNAs. Also deacylates mischarged glycyl-tRNA(Ala), protecting cells against glycine mischarging by AlaRS. Acts via tRNA-based rather than protein-based catalysis; rejects L-amino acids rather than detecting D-amino acids in the active site. By recycling D-aminoacyl-tRNA to D-amino acids and free tRNA molecules, this enzyme counteracts the toxicity associated with the formation of D-aminoacyl-tRNA entities in vivo and helps enforce protein L-homochirality. This is D-aminoacyl-tRNA deacylase from Shewanella pealeana (strain ATCC 700345 / ANG-SQ1).